The following is an 877-amino-acid chain: Potassium transporter 23 (877 aa).

2 disordered regions span residues 1 to 60 (MDDD…SLDG) and 72 to 92 (ASAGGASGGGGGGGPLSRASS). Residues 1–126 (MDDDDSGIQE…RGAHGHSSKE (126 aa)) lie on the Cytoplasmic side of the membrane. Positions 12–28 (PAPPPPPPPPPPPPPPL) are enriched in pro residues. The segment covering 76-86 (GASGGGGGGGP) has biased composition (gly residues). Residues 127–147 (ISMLSTVAMAFQTLGVVYGDM) traverse the membrane as a helical segment. Topologically, residues 148–173 (GTSPLYVFSDVFSKVPIKSEVEILGA) are extracellular. The chain crosses the membrane as a helical span at residues 174 to 194 (LSLVMYTIALIPFAKYVFIVL). At 195–260 (KANDNGEGGT…SLEKNPVFKN (66 aa)) the chain is on the cytoplasmic side. The helical transmembrane segment at 261–281 (ILLFLVLMGTSMVIGDGILTP) threads the bilayer. Over 282–295 (SMSVMSAVSGLQGR) the chain is Extracellular. The chain crosses the membrane as a helical span at residues 296–316 (VPGFGTDAVVIVSILFLVLLF). The Cytoplasmic portion of the chain corresponds to 317 to 325 (SVQRFGTGK). The chain crosses the membrane as a helical span at residues 326-346 (VGFMFAPILALWFINLGTIGI). Residues 347–379 (YNLAKYDISVVRAFNPVYIYLFFQTNGIKAWSA) are Extracellular-facing. Residues 380–400 (LGGCVLCITGAEAMFADLGHF) traverse the membrane as a helical segment. The Cytoplasmic portion of the chain corresponds to 401 to 406 (SVKSIQ). The chain crosses the membrane as a helical span at residues 407–427 (VAFTAVVFPCLLIAYMGQAAY). Over 428–441 (LMKYPFAVERIFYD) the chain is Extracellular. The helical transmembrane segment at 442–462 (SVPEILFWPVFVIATLAAMIA) threads the bilayer. Over 463 to 498 (SQAMISATFSCIKQAMALGCFPRIKIIHTSKKVMGQ) the chain is Cytoplasmic. Residues 499–519 (IYIPVMNWFLMVMCIIIVATF) traverse the membrane as a helical segment. The Extracellular segment spans residues 520 to 524 (RSTND). Residues 525 to 545 (IANAYGIAEVGVMMVSTALVT) form a helical membrane-spanning segment. Residues 546-555 (LVMLLIWQTN) are Cytoplasmic-facing. The helical transmembrane segment at 556 to 578 (LFLVMCFPVIFGSVEFVYLTAVL) threads the bilayer. Topologically, residues 579-583 (SKIQE) are extracellular. Residues 584-604 (GGWLPLAFSSLFLCIMYTWNY) form a helical membrane-spanning segment. Residues 605–877 (GSVLKYQSEM…IMRVGMTYMV (273 aa)) lie on the Cytoplasmic side of the membrane.

It belongs to the HAK/KUP transporter (TC 2.A.72.3) family.

It is found in the membrane. In terms of biological role, high-affinity potassium transporter. This chain is Potassium transporter 23 (HAK23), found in Oryza sativa subsp. japonica (Rice).